The sequence spans 124 residues: CRISPR-associated endoribonuclease Cas2 4 (124 aa).

Asp-40 lines the Mg(2+) pocket.

The protein belongs to the CRISPR-associated endoribonuclease Cas2 protein family. Homodimer, forms a heterotetramer with a Cas1 homodimer. The cofactor is Mg(2+).

Functionally, CRISPR (clustered regularly interspaced short palindromic repeat), is an adaptive immune system that provides protection against mobile genetic elements (viruses, transposable elements and conjugative plasmids). CRISPR clusters contain sequences complementary to antecedent mobile elements and target invading nucleic acids. CRISPR clusters are transcribed and processed into CRISPR RNA (crRNA). Functions as a ssRNA-specific endoribonuclease. Involved in the integration of spacer DNA into the CRISPR cassette. This Rhodospirillum rubrum (strain ATCC 11170 / ATH 1.1.1 / DSM 467 / LMG 4362 / NCIMB 8255 / S1) protein is CRISPR-associated endoribonuclease Cas2 4.